A 611-amino-acid polypeptide reads, in one-letter code: Phosphoenolpyruvate carboxykinase [GTP] (611 aa).

Residues Arg82 and 222-224 (YGG) contribute to the substrate site. Lys231 and His251 together coordinate Mn(2+). Ser273 is a substrate binding site. 274–279 (ACGKTN) is a binding site for GTP. Residue Cys275 is part of the active site. Asp298 contacts Mn(2+). Residue 389-391 (NSR) coordinates substrate. GTP contacts are provided by residues Arg391, Arg422, and 517 to 520 (FGDN).

Belongs to the phosphoenolpyruvate carboxykinase [GTP] family. In terms of assembly, monomer. It depends on Mn(2+) as a cofactor.

It is found in the cytoplasm. The catalysed reaction is oxaloacetate + GTP = phosphoenolpyruvate + GDP + CO2. The protein operates within carbohydrate biosynthesis; gluconeogenesis. Catalyzes the conversion of oxaloacetate (OAA) to phosphoenolpyruvate (PEP), the rate-limiting step in the metabolic pathway that produces glucose from lactate and other precursors derived from the citric acid cycle. The protein is Phosphoenolpyruvate carboxykinase [GTP] of Arthrobacter sp. (strain FB24).